The following is an 894-amino-acid chain: MRPMRIFVNDDRHVMAKHSSVYPTQEELEAVQNMVSHTERALKAVSDWIDEQEKGSSEQAESDNMDVPPEDDSKEGAGEQKTEHMTRTLRGVMRVGLVAKGLLLKGDLDLELVLLCKEKPTTALLDKVADNLAIQLAAVTEDKYEILQSVDDAAIVIKNTKEPPLSLTIHLTSPVVREEMEKVLAGETLSVNDPPDVLDRQKCLAALASLRHAKWFQARANGLKSCVIVIRVLRDLCTRVPTWGPLRGWPLELLCEKSIGTANRPMGAGEALRRVLECLASGIVMPDGSGIYDPCEKEATDAIGHLDRQQREDITQSAQHALRLAAFGQLHKVLGMDPLPSKMPKKPKNENPVDYTVQIPPSTTYAITPMKRPMEEDGEEKSPSKKKKKIQKKEEKAEPPQAMNALMRLNQLKPGLQYKLVSQTGPVHAPIFTMSVEVDGNSFEASGPSKKTAKLHVAVKVLQDMGLPTGAEGRDSSKGEDSAEETEAKPAVVAPAPVVEAVSTPSAAFPSDATAEQGPILTKHGKNPVMELNEKRRGLKYELISETGGSHDKRFVMEVEVDGQKFQGAGSNKKVAKAYAALAALEKLFPDTPLALDANKKKRAPVPVRGGPKFAAKPHNPGFGMGGPMHNEVPPPPNLRGRGRGGSIRGRGRGRGFGGANHGGYMNAGAGYGSYGYGGNSATAGYSQFYSNGGHSGNASGGGGGGGGGSSGYGSYYQGDNYNSPVPPKHAGKKQPHGGQQKPSYGSGYQSHQGQQQSYNQSPYSNYGPPQGKQKGYNHGQGSYSYSNSYNSPGGGGGSDYNYESKFNYSGSGGRSGGNSYGSGGASYNPGSHGGYGGGSGGGSSYQGKQGGYSQSNYNSPGSGQNYSGPPSSYQSSQGGYGRNADHSMNYQYR.

One can recognise a DZF domain in the interval 5 to 378 (RIFVNDDRHV…PMKRPMEEDG (374 aa)). Residues 50–86 (DEQEKGSSEQAESDNMDVPPEDDSKEGAGEQKTEHMT) are disordered. Over residues 60–73 (AESDNMDVPPEDDS) the composition is skewed to acidic residues. Serine 62 carries the phosphoserine modification. The segment covering 74 to 86 (KEGAGEQKTEHMT) has biased composition (basic and acidic residues). N6-acetyllysine is present on lysine 100. Threonine 188 is subject to Phosphothreonine; by PKR. The residue at position 190 (serine 190) is a Phosphoserine. Lysine 297 is covalently cross-linked (Glycyl lysine isopeptide (Lys-Gly) (interchain with G-Cter in ubiquitin)). Position 315 is a phosphothreonine; by PKR (threonine 315). Residue lysine 348 forms a Glycyl lysine isopeptide (Lys-Gly) (interchain with G-Cter in SUMO1) linkage. Positions 363 to 401 (TTYAITPMKRPMEEDGEEKSPSKKKKKIQKKEEKAEPPQ) are disordered. The Bipartite nuclear localization signal signature appears at 371–389 (KRPMEEDGEEKSPSKKKKK). The segment covering 372–383 (RPMEEDGEEKSP) has biased composition (basic and acidic residues). Phosphoserine occurs at positions 382 and 384. Lysine 396 is covalently cross-linked (Glycyl lysine isopeptide (Lys-Gly) (interchain with G-Cter in SUMO2)). A DRBM 1 domain is found at 398-467 (EPPQAMNALM…AVKVLQDMGL (70 aa)). Position 460 is an N6-acetyllysine (lysine 460). The tract at residues 466–524 (GLPTGAEGRDSSKGEDSAEETEAKPAVVAPAPVVEAVSTPSAAFPSDATAEQGPILTKH) is disordered. The segment covering 472–481 (EGRDSSKGED) has biased composition (basic and acidic residues). Phosphoserine is present on residues serine 476, serine 477, and serine 482. A Glycyl lysine isopeptide (Lys-Gly) (interchain with G-Cter in SUMO2) cross-link involves residue lysine 489. The segment covering 489 to 508 (KPAVVAPAPVVEAVSTPSAA) has biased composition (low complexity). Residues 524-590 (HGKNPVMELN…ALAALEKLFP (67 aa)) enclose the DRBM 2 domain. The residue at position 592 (threonine 592) is a Phosphothreonine. The interval 609–894 (RGGPKFAAKP…ADHSMNYQYR (286 aa)) is interaction with PRMT1. 2 disordered regions span residues 625-660 (MGGP…FGGA) and 718-894 (QGDN…YQYR). Gly residues predominate over residues 644–660 (RGGSIRGRGRGRGFGGA). 2 stretches are compositionally biased toward low complexity: residues 743–770 (PSYG…YGPP) and 777–792 (YNHG…SYNS). Residues serine 792, serine 810, serine 812, and serine 816 each carry the phosphoserine modification. 2 stretches are compositionally biased toward gly residues: residues 811–825 (GSGG…GSGG) and 832–851 (SHGG…GKQG). Residues 857–866 (NYNSPGSGQN) show a composition bias toward polar residues. The segment covering 867–878 (YSGPPSSYQSSQ) has biased composition (low complexity).

As to quaternary structure, identified in a IGF2BP1-dependent mRNP granule complex containing untranslated mRNAs. Interacts with FUS and SMN. Interacts (via C-terminus) with PRMT1. Forms a complex with ILF2. Can also bind to PRKDC/XRCC7: this may stabilize the interaction of PRKDC/XRCC7 and the heterodimeric complex of XRCC6/KU70 and XRCC5/KU80. Forms a heteromeric complex with ZNF346 and ILF3. Found in a nuclear export complex with XPO5, ILF3, Ran and double-stranded RNA or double-stranded minihelix VA1 RNA. Found in a nuclear export complex with XPO5, RAN, ILF3, ZNF346 and double-stranded RNA. Interacts with XPO5 and ZNF346. Forms a complex with ILF2, YLPM1, KHDRBS1, RBMX, NCOA5 and PPP1CA. Interacts with AGO1 and AGO2. Interacts with DHX36; this interaction occurs in a RNA-dependent manner. Interacts with ELAVL1; this interaction occurs in a RNA-dependent manner. Interacts with HAVCR2; this interaction promotes ILF3 ubiquitination and subsequent degradation. Phosphorylated at Thr-188 and Thr-315 by PKR in response to certain RNA viruses. This phosphorylation results in the dissociation of ILF2 from the ILF2-ILF3 complex resulting in a cytoplasmic sequestration of ILF3 where it can bind to viral RNAs and impede viral replication. In terms of processing, methylated by protein arginine N-methyltransferase 1. Post-translationally, ubiquitinated at Lys-297 in a TRIM47-dependent manner; this 'Lys-48'-linked ubiquitination promotes ILF3 degradation. In terms of tissue distribution, ubiquitous.

The protein localises to the nucleus. It is found in the nucleolus. The protein resides in the cytoplasm. Its function is as follows. RNA-binding protein that plays an essential role in the biogenesis of circular RNAs (circRNAs) which are produced by back-splicing circularization of pre-mRNAs. Within the nucleus, promotes circRNAs processing by stabilizing the regulatory elements residing in the flanking introns of the circularized exons. Plays thereby a role in the back-splicing of a subset of circRNAs. As a consequence, participates in a wide range of transcriptional and post-transcriptional processes. Binds to poly-U elements and AU-rich elements (AREs) in the 3'-UTR of target mRNAs. Upon viral infection, ILF3 accumulates in the cytoplasm and participates in the innate antiviral response. Mechanistically, ILF3 becomes phosphorylated and activated by the double-stranded RNA-activated protein kinase/PKR which releases ILF3 from cellular mature circRNAs. In turn, unbound ILF3 molecules are able to interact with and thus inhibit viral mRNAs. Functionally, (Microbial infection) Plays a positive role in HIV-1 virus production by binding to and thereby stabilizing HIV-1 RNA, together with ILF3. This is Interleukin enhancer-binding factor 3 (ILF3) from Homo sapiens (Human).